A 118-amino-acid polypeptide reads, in one-letter code: Large ribosomal subunit protein bL17 (118 aa).

The protein belongs to the bacterial ribosomal protein bL17 family. In terms of assembly, part of the 50S ribosomal subunit. Contacts protein L32.

The chain is Large ribosomal subunit protein bL17 from Phytoplasma mali (strain AT).